The chain runs to 375 residues: Succinyl-diaminopimelate desuccinylase (375 aa).

His66 serves as a coordination point for Zn(2+). The active site involves Asp68. A Zn(2+)-binding site is contributed by Asp99. Residue Glu133 is the Proton acceptor of the active site. Zn(2+) is bound by residues Glu134, Glu162, and His348.

This sequence belongs to the peptidase M20A family. DapE subfamily. In terms of assembly, homodimer. The cofactor is Zn(2+). It depends on Co(2+) as a cofactor.

The catalysed reaction is N-succinyl-(2S,6S)-2,6-diaminopimelate + H2O = (2S,6S)-2,6-diaminopimelate + succinate. It participates in amino-acid biosynthesis; L-lysine biosynthesis via DAP pathway; LL-2,6-diaminopimelate from (S)-tetrahydrodipicolinate (succinylase route): step 3/3. In terms of biological role, catalyzes the hydrolysis of N-succinyl-L,L-diaminopimelic acid (SDAP), forming succinate and LL-2,6-diaminopimelate (DAP), an intermediate involved in the bacterial biosynthesis of lysine and meso-diaminopimelic acid, an essential component of bacterial cell walls. This is Succinyl-diaminopimelate desuccinylase from Herminiimonas arsenicoxydans.